The chain runs to 320 residues: tRNA-cytidine(32) 2-sulfurtransferase (320 aa).

The short motif at 54–59 is the PP-loop motif element; that stretch reads SGGKDS. Positions 129, 132, and 220 each coordinate [4Fe-4S] cluster.

The protein belongs to the TtcA family. Homodimer. The cofactor is Mg(2+). [4Fe-4S] cluster is required as a cofactor.

It localises to the cytoplasm. The catalysed reaction is cytidine(32) in tRNA + S-sulfanyl-L-cysteinyl-[cysteine desulfurase] + AH2 + ATP = 2-thiocytidine(32) in tRNA + L-cysteinyl-[cysteine desulfurase] + A + AMP + diphosphate + H(+). The protein operates within tRNA modification. Catalyzes the ATP-dependent 2-thiolation of cytidine in position 32 of tRNA, to form 2-thiocytidine (s(2)C32). The sulfur atoms are provided by the cysteine/cysteine desulfurase (IscS) system. This chain is tRNA-cytidine(32) 2-sulfurtransferase, found in Bordetella parapertussis (strain 12822 / ATCC BAA-587 / NCTC 13253).